The primary structure comprises 87 residues: Large ribosomal subunit protein bL27 (87 aa).

This sequence belongs to the bacterial ribosomal protein bL27 family.

This Stenotrophomonas maltophilia (strain R551-3) protein is Large ribosomal subunit protein bL27.